The primary structure comprises 130 residues: Small ribosomal subunit protein uS11 (130 aa).

Belongs to the universal ribosomal protein uS11 family. Part of the 30S ribosomal subunit. Interacts with proteins S7 and S18. Binds to IF-3.

Functionally, located on the platform of the 30S subunit, it bridges several disparate RNA helices of the 16S rRNA. Forms part of the Shine-Dalgarno cleft in the 70S ribosome. In Gluconacetobacter diazotrophicus (strain ATCC 49037 / DSM 5601 / CCUG 37298 / CIP 103539 / LMG 7603 / PAl5), this protein is Small ribosomal subunit protein uS11.